Here is a 199-residue protein sequence, read N- to C-terminus: CASP-like protein 2B1 (199 aa).

Topologically, residues 1–26 are cytoplasmic; sequence MSYLGVGLSPVNVAGTKMKLMDRKVR. A helical transmembrane segment spans residues 27–47; sequence LTELILRCSVCALALVAAILI. Over 48–69 the chain is Extracellular; it reads ATDTQVKEIFTIQKKAKYTDMK. A helical transmembrane segment spans residues 70 to 90; it reads ALVFLVVVNGIAAAYSLLHMV. Over 91 to 106 the chain is Cytoplasmic; the sequence is RCVVGMMKGSVLFSKP. A helical membrane pass occupies residues 107 to 127; it reads LAWAIFSGDQAIAYLTVAGVA. At 128-164 the chain is on the extracellular side; that stretch reads AAAQSAAFAKLGEPELQWMKICTIYGKFCNQVGEGIA. A helical membrane pass occupies residues 165–185; sequence TALLASIGMVLISSISAFALF. Topologically, residues 186–199 are cytoplasmic; it reads RLYGGNKAQQGSRW.

It belongs to the Casparian strip membrane proteins (CASP) family. In terms of assembly, homodimer and heterodimers.

Its subcellular location is the cell membrane. The sequence is that of CASP-like protein 2B1 from Eutrema halophilum (Salt cress).